The primary structure comprises 185 residues: Pectinesterase inhibitor (185 aa).

The signal sequence occupies residues 1 to 32; sequence MAFSYCSSSLFVSLLLVILFISPLSQRPSVKA. 2 cysteine pairs are disulfide-bonded: cysteine 41/cysteine 50 and cysteine 106/cysteine 146. Residue lysine 185 is a propeptide.

Belongs to the PMEI family. Fruit.

It localises to the cytoplasm. Functionally, inhibits pectin methylesterase; may be involved in the regulation of fruit ripening. This chain is Pectinesterase inhibitor (PMEI), found in Actinidia deliciosa (Kiwi).